Reading from the N-terminus, the 307-residue chain is Nuclear polyadenylated RNA-binding protein nab2 (307 aa).

Residues 102-135 (STDKSQQSFSVPETSIQPQSSQTPNITSLREEKE) form a disordered region. Polar residues predominate over residues 105–129 (KSQQSFSVPETSIQPQSSQTPNITS). 3 C3H1-type zinc fingers span residues 178–202 (TQEVPLCKYADKCSRANCIFAHPTP), 217–232 (CASGKECKAADCVKGH), and 254–268 (CKYKPCLNPACRFIH). Residues 274–307 (NMTWRPPSKTEETSLSERSFAVNESEEQLHVPSV) form a disordered region.

This sequence belongs to the ZC3H14 family.

It is found in the nucleus. Its function is as follows. RNA-binding protein involved in RNA processing. Acts as a regulator of mRNA stability: binds to mRNAs and pre-mRNAs, preventing their degradation. Involved in the biogenesis of circular RNAs (circRNAs) which are produced by back-splicing circularization of pre-mRNAs. The sequence is that of Nuclear polyadenylated RNA-binding protein nab2 from Schizosaccharomyces pombe (strain 972 / ATCC 24843) (Fission yeast).